The following is a 227-amino-acid chain: Homeobox-leucine zipper protein ATHB-54 (227 aa).

The segment at residues 65-124 (EITKKRKLTPIQLRLLEESFEEEKRLEPDRKLWLAEKLGLQPSQVAVWFQNRRARYKTKQ) is a DNA-binding region (homeobox). The leucine-zipper stretch occupies residues 125 to 153 (LEHDCDSLKASYAKLKTDWDILFVQNQTL). The interval 175 to 198 (IERKRLGEEGSSVKSDNTQYSEEE) is disordered.

It belongs to the HD-ZIP homeobox family. Class I subfamily. As to expression, predominantly expressed in flowers and siliques.

The protein localises to the nucleus. Functionally, probable transcription factor. This chain is Homeobox-leucine zipper protein ATHB-54 (ATHB-54), found in Arabidopsis thaliana (Mouse-ear cress).